Here is an 87-residue protein sequence, read N- to C-terminus: Small ribosomal subunit protein uS15 (87 aa).

It belongs to the universal ribosomal protein uS15 family. Part of the 30S ribosomal subunit. Forms a bridge to the 50S subunit in the 70S ribosome, contacting the 23S rRNA.

Its function is as follows. One of the primary rRNA binding proteins, it binds directly to 16S rRNA where it helps nucleate assembly of the platform of the 30S subunit by binding and bridging several RNA helices of the 16S rRNA. In terms of biological role, forms an intersubunit bridge (bridge B4) with the 23S rRNA of the 50S subunit in the ribosome. The sequence is that of Small ribosomal subunit protein uS15 from Clostridium beijerinckii (strain ATCC 51743 / NCIMB 8052) (Clostridium acetobutylicum).